The chain runs to 863 residues: Potassium/sodium hyperpolarization-activated cyclic nucleotide-gated channel 2 (863 aa).

The span at 1-10 shows a compositional bias: gly residues; that stretch reads MDARGGGGRP. A disordered region spans residues 1–131; that stretch reads MDARGGGGRP…AGPAGEPRGS (131 aa). Residues 1 to 188 lie on the Cytoplasmic side of the membrane; that stretch reads MDARGGGGRP…PYSDFRFYWD (188 aa). The span at 17-47 shows a compositional bias: pro residues; it reads TPAPGPPPPPPPPAPPQPQPPPAPPPNPTTP. Over residues 106–128 the composition is skewed to low complexity; that stretch reads GAASGPAAAEEAGSEEAGPAGEP. Phosphoserine occurs at positions 119 and 134. Positions 131–182 are involved in subunit assembly; it reads SQASFLQRQFGALLQPGVNKFSLRMFGSQKAVEREQERVKSAGAWIIHPYSD. A helical transmembrane segment spans residues 189–209; it reads FTMLLFMVGNLIIIPVGITFF. Residues 210-213 are Extracellular-facing; the sequence is KDET. A helical transmembrane segment spans residues 214-234; that stretch reads TAPWIVFNVVSDTFFLMDLVL. The Cytoplasmic portion of the chain corresponds to 235–261; sequence NFRTGIVIEDNTEIILDPEKIKKKYLR. A helical transmembrane segment spans residues 262-282; that stretch reads TWFVVDFVSSIPVDYIFLIVE. The Extracellular segment spans residues 283-290; that stretch reads KGIDSEVY. Residues 291–311 form a helical; Voltage-sensor membrane-spanning segment; that stretch reads KTARALRIVRFTKILSLLRLL. The Cytoplasmic portion of the chain corresponds to 312-342; it reads RLSRLIRYIHQWEEIFHMTYDLASAVMRICN. A helical membrane pass occupies residues 343-363; it reads LISMMLLLCHWDGCLQFLVPM. At 364-386 the chain is on the extracellular side; sequence LQDFPSDCWVSINNMVNHSWSEL. A glycan (N-linked (GlcNAc...) asparagine) is linked at N380. Positions 387 to 408 form an intramembrane region, pore-forming; that stretch reads YSFALFKAMSHMLCIGYGRQAP. The Extracellular segment spans residues 409 to 413; that stretch reads ESMTD. A helical membrane pass occupies residues 414 to 434; that stretch reads IWLTMLSMIVGATCYAMFIGH. Topologically, residues 435–863 are cytoplasmic; the sequence is ATALIQSLDS…SARSRLSSNL (429 aa). 3',5'-cyclic AMP is bound by residues G581, E582, C584, R591, T592, and R632. Residue S641 is modified to Phosphoserine; by PKG/PRKG2. Phosphoserine is present on S726. An Omega-N-methylarginine modification is found at R728. A disordered region spans residues 730–863; it reads VRRAPPGPLP…SARSRLSSNL (134 aa). Residues 734 to 755 are compositionally biased toward pro residues; that stretch reads PPGPLPPAASPGPPAASPPAAP. Phosphoserine is present on residues S743, S750, and S757. Composition is skewed to low complexity over residues 756-765 and 778-834; these read SSPRAPRTSP and PALP…AAPS. Phosphoserine occurs at positions 840, 842, and 847.

Belongs to the potassium channel HCN family. As to quaternary structure, homotetramer. The channel is composed of a homo- or heterotetrameric complex of pore-forming subunits. Heterotetramer with HCN1. Forms an obligate 4:4 complex with accessory subunit PEX5L. Interacts with KCNE2. Phosphorylation at Ser-641 by PRKG2 shifts the voltage-dependence to more negative voltages, hence counteracting the stimulatory effect of cGMP on gating. Post-translationally, N-glycosylated; required for cell surface trafficking of HCN2. In terms of processing, S-palmitoylated. As to expression, highly expressed in neonatal and adult ventricle and in brain. Highly expressed in the pyramidal layer in hippocampus, in anterior dorsal nucleus in thalamus, in the mammillary nucleus in hypothalamus, in red nucleus, in trigeminal mesencephalic, spinal and principal nuclei, in cochlear and trapezoid nuclei and in the dorsal tegemental nucleus.

It is found in the cell membrane. The enzyme catalyses Na(+)(in) = Na(+)(out). It carries out the reaction K(+)(in) = K(+)(out). It catalyses the reaction NH4(+)(in) = NH4(+)(out). Its activity is regulated as follows. Activated by cAMP, and at 10-100 times higher concentrations, also by cGMP. cAMP binding causes a conformation change that leads to the assembly of an active tetramer and channel opening. In the absence of cAMP, the C-terminal region is thought to exert a tonic inhibition on the pore when HCN2 is in a non-tetrameric form. Channel activity is modulated by intracellular chloride ions and pH; acidic pH shifts the activation to more negative voltages. Phosphatidylinositol-4,5- bisphosphate (PIP(2)) acts as a ligand that allosterically opens HCN2 by shifting voltage-dependent channel activation toward depolarized potentials. Inhibited by extracellular cesium ions. Its function is as follows. Hyperpolarization-activated ion channel exhibiting weak selectivity for potassium over sodium ions. Contributes to the native pacemaker currents in heart (If) and in neurons (Ih). Can also transport ammonium in the distal nephron. Involved in the initiation of neuropathic pain in sensory neurons. Produces a large instantaneous current. In Rattus norvegicus (Rat), this protein is Potassium/sodium hyperpolarization-activated cyclic nucleotide-gated channel 2 (Hcn2).